The following is a 485-amino-acid chain: Probable phosphomannomutase (485 aa).

Ser-86 serves as the catalytic Phosphoserine intermediate. Mg(2+)-binding residues include Ser-86, Asp-236, Asp-238, and Asp-240.

It belongs to the phosphohexose mutase family. Mg(2+) serves as cofactor.

It carries out the reaction alpha-D-mannose 1-phosphate = D-mannose 6-phosphate. The protein is Probable phosphomannomutase of Haemophilus influenzae (strain ATCC 51907 / DSM 11121 / KW20 / Rd).